The following is a 1328-amino-acid chain: ABC transporter C family member 7 (1328 aa).

Residues 104–389 enclose the ABC transmembrane type-1 1 domain; the sequence is HKTSIIVQIF…LPQAIQRLLS (286 aa). The next 6 membrane-spanning stretches (helical) occupy residues 112–132, 140–160, 224–244, 245–265, 287–307, and 333–353; these read IFSA…ILYV, SFLV…FLSI, LILL…CWTI, GYSG…STFL, ISEM…LFFI, and MVVQ…YTLI. In terms of domain architecture, ABC transporter 1 spans 457–678; that stretch reads IELVNNDSIE…FDFESIMKTK (222 aa). 490 to 497 is an ATP binding site; it reads GVVGSGKS. The span at 684 to 695 shows a compositional bias: low complexity; it reads LNNSNNNNNNNN. The segment at 684–708 is disordered; that stretch reads LNNSNNNNNNNNNKEEEEDVENLEK. The next 5 membrane-spanning stretches (helical) occupy residues 762-782, 802-822, 894-914, 988-1008, and 1014-1034; these read FIFF…FLLF, DSFY…FLGI, VLMM…LALF, IGIK…FFSL, and GLSV…NWCI. The region spanning 765–1046 is the ABC transmembrane type-1 2 domain; it reads FFTMIMMYII…YIEFSMKMSS (282 aa). Positions 1083 to 1316 constitute an ABC transporter 2 domain; it reads IQFKNVEIKY…INNQNSKFKK (234 aa). 1117–1124 serves as a coordination point for ATP; it reads GKSGSGKS.

Belongs to the ABC transporter superfamily. ABCC family. Conjugate transporter (TC 3.A.1.208) subfamily.

It is found in the membrane. This Dictyostelium discoideum (Social amoeba) protein is ABC transporter C family member 7 (abcC7).